A 220-amino-acid chain; its full sequence is Inner kinetochore subunit fta3 (220 aa).

This sequence belongs to the CENP-H/MCM16 family. In terms of assembly, component of the inner kinetochore constitutive centromere-associated network (CCAN) (also known as central kinetochore Sim4 complex in fission yeast), which is composed of at least cnl2, cnp3, cnp20, fta1, fta2, fta3, fta4, fta6, fta7, mal2, mhf1, mhf2, mis6, mis15, mis17, sim4 and wip1.

It localises to the nucleus. The protein resides in the chromosome. Its subcellular location is the centromere. The protein localises to the kinetochore. Functionally, component of the kinetochore, a multiprotein complex that assembles on centromeric DNA and attaches chromosomes to spindle microtubules, mediating chromosome segregation and sister chromatid segregation during meiosis and mitosis. Component of the inner kinetochore constitutive centromere-associated network (CCAN), which serves as a structural platform for outer kinetochore assembly. Fta2, fta3 and fta4 associate with the central core (cnt) and inner repeat (inr) region of the centromere. The chain is Inner kinetochore subunit fta3 (fta3) from Schizosaccharomyces pombe (strain 972 / ATCC 24843) (Fission yeast).